Reading from the N-terminus, the 942-residue chain is Lon protease homolog 4, chloroplastic/mitochondrial (942 aa).

Position 54 is a phosphoserine (Ser-54). The 223-residue stretch at 79-301 folds into the Lon N-terminal domain; the sequence is VIALPLPHKP…LTLELVKKEV (223 aa). 456 to 463 is an ATP binding site; the sequence is GPTGVGKT. Residues 673 to 725 are disordered; sequence ISDDVTTDTEETKSLAKTDLESPETSAEGSTVLTDELATGDPTESTTEQSGEV. The segment covering 682–692 has biased composition (basic and acidic residues); the sequence is EETKSLAKTDL. Positions 695 to 705 are enriched in polar residues; that stretch reads PETSAEGSTVL. Residues 756–940 form the Lon proteolytic domain; that stretch reads QTPVGVVMGL…EQIFELAFGY (185 aa). Catalysis depends on residues Ser-846 and Lys-889.

This sequence belongs to the peptidase S16 family. In terms of assembly, homohexamer or homoheptamer. Organized in a ring with a central cavity.

The protein localises to the mitochondrion matrix. The protein resides in the plastid. It is found in the chloroplast thylakoid membrane. The catalysed reaction is Hydrolysis of proteins in presence of ATP.. In terms of biological role, ATP-dependent serine protease that mediates the selective degradation of misfolded, unassembled or oxidatively damaged polypeptides as well as certain short-lived regulatory proteins in the mitochondrial matrix. May also have a chaperone function in the assembly of inner membrane protein complexes. Participates in the regulation of mitochondrial gene expression and in the maintenance of the integrity of the mitochondrial genome. Binds to mitochondrial DNA in a site-specific manner. The protein is Lon protease homolog 4, chloroplastic/mitochondrial (LON4) of Arabidopsis thaliana (Mouse-ear cress).